Consider the following 537-residue polypeptide: Protein disulfide isomerase-like 1-5 (537 aa).

Positions 1–29 (MSLIPKPISKVSTFTFILLILLSFTIIIA) are cleaved as a signal peptide. In terms of domain architecture, Thioredoxin 1 spans 58-184 (LQEDRPEQQS…IVIWVQKKTG (127 aa)). Cys-106 functions as the Nucleophile in the catalytic mechanism. N-linked (GlcNAc...) asparagine glycosylation is found at Asn-160, Asn-364, and Asn-416. Positions 380–526 (LLESDPSPNS…IAVFINEELL (147 aa)) constitute a Thioredoxin 2 domain. Catalysis depends on nucleophile residues Cys-447 and Cys-450. Cys-447 and Cys-450 are disulfide-bonded. The N-linked (GlcNAc...) asparagine glycan is linked to Asn-530. Residues 534 to 537 (KDEL) carry the Prevents secretion from ER motif.

It belongs to the protein disulfide isomerase family. In terms of tissue distribution, widely expressed.

The protein localises to the endoplasmic reticulum lumen. The catalysed reaction is Catalyzes the rearrangement of -S-S- bonds in proteins.. In terms of biological role, acts as a protein-folding catalyst that interacts with nascent polypeptides to catalyze the formation, isomerization, and reduction or oxidation of disulfide bonds. The polypeptide is Protein disulfide isomerase-like 1-5 (PDIL1-5) (Arabidopsis thaliana (Mouse-ear cress)).